We begin with the raw amino-acid sequence, 743 residues long: F-box protein COS111 (743 aa).

Positions 145–191 constitute an F-box domain; that stretch reads ELHIKNLPVEILDYIFYLVDDNLDYKSCMYTCKLFYFLAKPYYYENL. Disordered stretches follow at residues 224–257 and 311–330; these read IKPG…DPQY and FSNV…SSST. A compositionally biased stretch (acidic residues) spans 229-248; sequence DEDEQEEGQEENAENGEEEN.

F-box protein probably involved in ubiquitin conjugation pathway. The sequence is that of F-box protein COS111 (COS111) from Candida albicans (strain SC5314 / ATCC MYA-2876) (Yeast).